We begin with the raw amino-acid sequence, 241 residues long: 1-(5-phosphoribosyl)-5-[(5-phosphoribosylamino)methylideneamino] imidazole-4-carboxamide isomerase (241 aa).

D10 functions as the Proton acceptor in the catalytic mechanism. D131 acts as the Proton donor in catalysis.

Belongs to the HisA/HisF family.

The protein localises to the cytoplasm. It catalyses the reaction 1-(5-phospho-beta-D-ribosyl)-5-[(5-phospho-beta-D-ribosylamino)methylideneamino]imidazole-4-carboxamide = 5-[(5-phospho-1-deoxy-D-ribulos-1-ylimino)methylamino]-1-(5-phospho-beta-D-ribosyl)imidazole-4-carboxamide. It functions in the pathway amino-acid biosynthesis; L-histidine biosynthesis; L-histidine from 5-phospho-alpha-D-ribose 1-diphosphate: step 4/9. This Bifidobacterium longum (strain NCC 2705) protein is 1-(5-phosphoribosyl)-5-[(5-phosphoribosylamino)methylideneamino] imidazole-4-carboxamide isomerase.